A 153-amino-acid polypeptide reads, in one-letter code: uncharacterized protein (153 aa).

A signal peptide spans 1-25; sequence MKKRQYLKSLYVALLGTLCYLSVNA.

This is an uncharacterized protein from Pasteurella multocida (strain Pm70).